The sequence spans 103 residues: Pyrimidine/purine nucleoside phosphorylase (103 aa).

It belongs to the nucleoside phosphorylase PpnP family.

The catalysed reaction is a purine D-ribonucleoside + phosphate = a purine nucleobase + alpha-D-ribose 1-phosphate. The enzyme catalyses adenosine + phosphate = alpha-D-ribose 1-phosphate + adenine. It catalyses the reaction cytidine + phosphate = cytosine + alpha-D-ribose 1-phosphate. It carries out the reaction guanosine + phosphate = alpha-D-ribose 1-phosphate + guanine. The catalysed reaction is inosine + phosphate = alpha-D-ribose 1-phosphate + hypoxanthine. The enzyme catalyses thymidine + phosphate = 2-deoxy-alpha-D-ribose 1-phosphate + thymine. It catalyses the reaction uridine + phosphate = alpha-D-ribose 1-phosphate + uracil. It carries out the reaction xanthosine + phosphate = alpha-D-ribose 1-phosphate + xanthine. Catalyzes the phosphorolysis of diverse nucleosides, yielding D-ribose 1-phosphate and the respective free bases. Can use uridine, adenosine, guanosine, cytidine, thymidine, inosine and xanthosine as substrates. Also catalyzes the reverse reactions. This is Pyrimidine/purine nucleoside phosphorylase from Shewanella sp. (strain ANA-3).